Here is a 334-residue protein sequence, read N- to C-terminus: Homoserine O-acetyltransferase (334 aa).

Residues 61-318 enclose the AB hydrolase-1 domain; that stretch reads LVLHALTGDS…GSIHGHDAFL (258 aa). The active-site Nucleophile is serine 148. Arginine 205 provides a ligand contact to substrate. Catalysis depends on residues aspartate 285 and histidine 314. Substrate is bound at residue aspartate 315.

This sequence belongs to the AB hydrolase superfamily. MetX family. As to quaternary structure, homodimer.

The protein localises to the cytoplasm. It catalyses the reaction L-homoserine + acetyl-CoA = O-acetyl-L-homoserine + CoA. The protein operates within amino-acid biosynthesis; L-methionine biosynthesis via de novo pathway; O-acetyl-L-homoserine from L-homoserine: step 1/1. Its function is as follows. Transfers an acetyl group from acetyl-CoA to L-homoserine, forming acetyl-L-homoserine. The chain is Homoserine O-acetyltransferase from Deinococcus radiodurans (strain ATCC 13939 / DSM 20539 / JCM 16871 / CCUG 27074 / LMG 4051 / NBRC 15346 / NCIMB 9279 / VKM B-1422 / R1).